Reading from the N-terminus, the 247-residue chain is NAD-dependent protein deacetylase (247 aa).

A Deacetylase sirtuin-type domain is found at 1-244 (MIYEKVAEEL…PKILENVRQK (244 aa)). Positions 22, 26, 33, 34, 98, 100, 101, and 116 each coordinate NAD(+). Phenylalanine 33 contacts nicotinamide. Nicotinamide-binding residues include isoleucine 100 and aspartate 101. Catalysis depends on histidine 116, which acts as the Proton acceptor. 4 residues coordinate Zn(2+): cysteine 124, cysteine 127, cysteine 149, and cysteine 151. Residues serine 187, serine 188, asparagine 212, and valine 230 each contribute to the NAD(+) site.

The protein belongs to the sirtuin family. Class U subfamily. Monomer. Zn(2+) serves as cofactor.

The protein localises to the cytoplasm. The catalysed reaction is N(6)-acetyl-L-lysyl-[protein] + NAD(+) + H2O = 2''-O-acetyl-ADP-D-ribose + nicotinamide + L-lysyl-[protein]. In terms of biological role, NAD-dependent protein deacetylase which modulates the activities of several enzymes which are inactive in their acetylated form. Deacetylates the N-terminal lysine residue of albA1, the major archaeal DNA compaction protein and that, in turn, increases albA1's DNA binding affinity, thereby repressing transcription. This is NAD-dependent protein deacetylase from Saccharolobus solfataricus (strain ATCC 35092 / DSM 1617 / JCM 11322 / P2) (Sulfolobus solfataricus).